Here is a 158-residue protein sequence, read N- to C-terminus: NADH-quinone oxidoreductase subunit B (158 aa).

4 residues coordinate [4Fe-4S] cluster: cysteine 37, cysteine 38, cysteine 102, and cysteine 132.

Belongs to the complex I 20 kDa subunit family. In terms of assembly, NDH-1 is composed of 14 different subunits. Subunits NuoB, C, D, E, F, and G constitute the peripheral sector of the complex. [4Fe-4S] cluster serves as cofactor.

The protein localises to the cell inner membrane. The catalysed reaction is a quinone + NADH + 5 H(+)(in) = a quinol + NAD(+) + 4 H(+)(out). NDH-1 shuttles electrons from NADH, via FMN and iron-sulfur (Fe-S) centers, to quinones in the respiratory chain. The immediate electron acceptor for the enzyme in this species is believed to be ubiquinone. Couples the redox reaction to proton translocation (for every two electrons transferred, four hydrogen ions are translocated across the cytoplasmic membrane), and thus conserves the redox energy in a proton gradient. The polypeptide is NADH-quinone oxidoreductase subunit B (Acidithiobacillus ferrooxidans (strain ATCC 23270 / DSM 14882 / CIP 104768 / NCIMB 8455) (Ferrobacillus ferrooxidans (strain ATCC 23270))).